We begin with the raw amino-acid sequence, 185 residues long: Acireductone dioxygenase (185 aa).

His96, His98, Glu102, and His140 together coordinate Fe(2+). Residues His96, His98, Glu102, and His140 each coordinate Ni(2+).

It belongs to the acireductone dioxygenase (ARD) family. In terms of assembly, monomer. It depends on Fe(2+) as a cofactor. The cofactor is Ni(2+).

The catalysed reaction is 1,2-dihydroxy-5-(methylsulfanyl)pent-1-en-3-one + O2 = 3-(methylsulfanyl)propanoate + CO + formate + 2 H(+). It carries out the reaction 1,2-dihydroxy-5-(methylsulfanyl)pent-1-en-3-one + O2 = 4-methylsulfanyl-2-oxobutanoate + formate + 2 H(+). The protein operates within amino-acid biosynthesis; L-methionine biosynthesis via salvage pathway; L-methionine from S-methyl-5-thio-alpha-D-ribose 1-phosphate: step 5/6. Catalyzes 2 different reactions between oxygen and the acireductone 1,2-dihydroxy-3-keto-5-methylthiopentene (DHK-MTPene) depending upon the metal bound in the active site. Fe-containing acireductone dioxygenase (Fe-ARD) produces formate and 2-keto-4-methylthiobutyrate (KMTB), the alpha-ketoacid precursor of methionine in the methionine recycle pathway. Ni-containing acireductone dioxygenase (Ni-ARD) produces methylthiopropionate, carbon monoxide and formate, and does not lie on the methionine recycle pathway. In Hahella chejuensis (strain KCTC 2396), this protein is Acireductone dioxygenase.